We begin with the raw amino-acid sequence, 238 residues long: Oil body-associated protein 1A (238 aa).

Belongs to the OBAP family. In terms of tissue distribution, expressed in seeds, but not in leaves or roots. Highest expression in scutellum. Detected in embryo axis and endosperm.

It localises to the lipid droplet. The polypeptide is Oil body-associated protein 1A (Zea mays (Maize)).